We begin with the raw amino-acid sequence, 452 residues long: UPF0210 protein CHY_1509 (452 aa).

This sequence belongs to the UPF0210 family. Homodimer.

The chain is UPF0210 protein CHY_1509 from Carboxydothermus hydrogenoformans (strain ATCC BAA-161 / DSM 6008 / Z-2901).